The primary structure comprises 331 residues: L-lactate dehydrogenase A chain (331 aa).

NAD(+)-binding positions include 29 to 57 (GMVGMASAISILLKDLCDELAMVDVMEDK) and Arg98. Substrate-binding residues include Arg105, Asn137, and Arg168. Residue Asn137 participates in NAD(+) binding. The active-site Proton acceptor is the His192. Thr247 serves as a coordination point for substrate.

This sequence belongs to the LDH/MDH superfamily. LDH family. Homotetramer.

The protein localises to the cytoplasm. It catalyses the reaction (S)-lactate + NAD(+) = pyruvate + NADH + H(+). It participates in fermentation; pyruvate fermentation to lactate; (S)-lactate from pyruvate: step 1/1. In terms of biological role, interconverts simultaneously and stereospecifically pyruvate and lactate with concomitant interconversion of NADH and NAD(+). In Gobionotothen gibberifrons (Humped rockcod), this protein is L-lactate dehydrogenase A chain (ldha).